A 441-amino-acid polypeptide reads, in one-letter code: S-adenosylmethionine synthase 1 (441 aa).

E9 is a binding site for Mg(2+). Residue H15 participates in ATP binding. Residue E43 participates in K(+) binding. Residues E56 and Q99 each contribute to the L-methionine site. ATP-binding positions include 167 to 169, 235 to 238, D246, 252 to 253, A269, K273, and K277; these read DGK, SGRF, and RK. D246 contributes to the L-methionine binding site. Position 277 (K277) interacts with L-methionine.

The protein belongs to the AdoMet synthase family. Homotetramer. The cofactor is Mn(2+). Requires Mg(2+) as cofactor. Co(2+) serves as cofactor. K(+) is required as a cofactor.

Its subcellular location is the cytoplasm. It carries out the reaction L-methionine + ATP + H2O = S-adenosyl-L-methionine + phosphate + diphosphate. Its pathway is amino-acid biosynthesis; S-adenosyl-L-methionine biosynthesis; S-adenosyl-L-methionine from L-methionine: step 1/1. Functionally, catalyzes the formation of S-adenosylmethionine from methionine and ATP. The reaction comprises two steps that are both catalyzed by the same enzyme: formation of S-adenosylmethionine (AdoMet) and triphosphate, and subsequent hydrolysis of the triphosphate. This Daucus carota (Wild carrot) protein is S-adenosylmethionine synthase 1 (SAMS1).